The following is a 210-amino-acid chain: NADH dehydrogenase [ubiquinone] iron-sulfur protein 8, mitochondrial (210 aa).

The transit peptide at 1 to 34 (MRCLTTPMLLRALAQAARAGPPCGRSLHSSAVAA) directs the protein to the mitochondrion. 2 consecutive 4Fe-4S ferredoxin-type domains span residues 102–131 (RRYPSGEERCIACKLCEAICPAQAITIEAE) and 141–170 (TRYDIDMTKCIYCGFCQEACPVDAIVEGPN). Residues cysteine 111, cysteine 114, cysteine 117, cysteine 121, cysteine 150, cysteine 153, cysteine 156, and cysteine 160 each contribute to the [4Fe-4S] cluster site.

The protein belongs to the complex I 23 kDa subunit family. Core subunit of respiratory chain NADH dehydrogenase (Complex I) which is composed of 45 different subunits. This is a component of the iron-sulfur (IP) fragment of the enzyme. Interacts with RAB5IF. [4Fe-4S] cluster serves as cofactor.

Its subcellular location is the mitochondrion inner membrane. It carries out the reaction a ubiquinone + NADH + 5 H(+)(in) = a ubiquinol + NAD(+) + 4 H(+)(out). In terms of biological role, core subunit of the mitochondrial membrane respiratory chain NADH dehydrogenase (Complex I) which catalyzes electron transfer from NADH through the respiratory chain, using ubiquinone as an electron acceptor. Essential for the catalytic activity and assembly of complex I. This chain is NADH dehydrogenase [ubiquinone] iron-sulfur protein 8, mitochondrial (NDUFS8), found in Pongo abelii (Sumatran orangutan).